The following is an 88-amino-acid chain: Otospiralin (88 aa).

The first 21 residues, 1-21 (MQACMVPGLALCLLLGSLTEA), serve as a signal peptide directing secretion.

The protein belongs to the otospiralin family. As to expression, ear specific.

It localises to the secreted. In terms of biological role, may be essential for the survival of the neurosensory epithelium of the inner ear. This is Otospiralin (OTOS) from Cavia porcellus (Guinea pig).